The primary structure comprises 486 residues: MAEHDDGDLIAAIRGLARANVLVVGDLMLDRYAYGRVERISPEAPVPILTVTREIAMPGGAGNVVRNLTALDAAAAFVSVVGDDQEGSDLTALIGGQPNVEPWLLVETGRATTVKTRYIAAGQHLIRADRELVMPLTDKLGERLLKIASDAMAATSVTVLSDYRKGVLAPTIARNLIASARSIGRTVIVDPKGADWSHYAEADVITPNRRELAEAVGRDLPDEAAIVGAAREVIGRFGFGAVLCTRSEDGMSLVTVDTVRHYPAEAAEVYDVSGAGDTVVAVLAAGLASGLPLEIAARLSNIAGGLVVGKVGTAVARPDDLVDAVKPASGALRKVVTRQAAAEAAERWRQRGWRIGFTNGCFDLLHPGHVHLLEQARAGCDRLVVGLNADSSVRRLKGATRPVQPEAARAAVLASLASVDLVVIFEEDTPLDLLSAIRPDVLVKGADYTHDTVVGAREVESWGGRVMLAELLPGHSTTATVTRLRS.

A ribokinase region spans residues 1-331 (MAEHDDGDLI…VDAVKPASGA (331 aa)). ATP is bound at residue 208-211 (NRRE). Residue aspartate 277 is part of the active site. The tract at residues 357 to 486 (FTNGCFDLLH…TTATVTRLRS (130 aa)) is cytidylyltransferase.

The protein in the N-terminal section; belongs to the carbohydrate kinase PfkB family. In the C-terminal section; belongs to the cytidylyltransferase family. As to quaternary structure, homodimer.

It carries out the reaction D-glycero-beta-D-manno-heptose 7-phosphate + ATP = D-glycero-beta-D-manno-heptose 1,7-bisphosphate + ADP + H(+). The enzyme catalyses D-glycero-beta-D-manno-heptose 1-phosphate + ATP + H(+) = ADP-D-glycero-beta-D-manno-heptose + diphosphate. It functions in the pathway nucleotide-sugar biosynthesis; ADP-L-glycero-beta-D-manno-heptose biosynthesis; ADP-L-glycero-beta-D-manno-heptose from D-glycero-beta-D-manno-heptose 7-phosphate: step 1/4. The protein operates within nucleotide-sugar biosynthesis; ADP-L-glycero-beta-D-manno-heptose biosynthesis; ADP-L-glycero-beta-D-manno-heptose from D-glycero-beta-D-manno-heptose 7-phosphate: step 3/4. Its function is as follows. Catalyzes the phosphorylation of D-glycero-D-manno-heptose 7-phosphate at the C-1 position to selectively form D-glycero-beta-D-manno-heptose-1,7-bisphosphate. In terms of biological role, catalyzes the ADP transfer from ATP to D-glycero-beta-D-manno-heptose 1-phosphate, yielding ADP-D-glycero-beta-D-manno-heptose. This Acidiphilium cryptum (strain JF-5) protein is Bifunctional protein HldE.